The sequence spans 258 residues: Arylamine N-acetyltransferase 1 (258 aa).

The active-site Acyl-thioester intermediate is Cys59. Substrate is bound at residue 97-98 (IH). Active-site residues include His98 and Asp113. CoA-binding residues include Tyr199 and Thr205.

Belongs to the arylamine N-acetyltransferase family.

It localises to the cytoplasm. It carries out the reaction an arylamine + acetyl-CoA = an N-acetylarylamine + CoA. Participates in the detoxification of a plethora of hydrazine and arylamine drugs. This Felis catus (Cat) protein is Arylamine N-acetyltransferase 1 (NAT1).